Here is a 361-residue protein sequence, read N- to C-terminus: 3-dehydroquinate synthase (361 aa).

NAD(+) contacts are provided by residues 72–77 (SGEKEK), 130–131 (TT), lysine 142, and lysine 151. Zn(2+) contacts are provided by glutamate 184, histidine 247, and histidine 264.

The protein belongs to the sugar phosphate cyclases superfamily. Dehydroquinate synthase family. It depends on Co(2+) as a cofactor. The cofactor is Zn(2+). NAD(+) is required as a cofactor.

It localises to the cytoplasm. The enzyme catalyses 7-phospho-2-dehydro-3-deoxy-D-arabino-heptonate = 3-dehydroquinate + phosphate. The protein operates within metabolic intermediate biosynthesis; chorismate biosynthesis; chorismate from D-erythrose 4-phosphate and phosphoenolpyruvate: step 2/7. Its function is as follows. Catalyzes the conversion of 3-deoxy-D-arabino-heptulosonate 7-phosphate (DAHP) to dehydroquinate (DHQ). This chain is 3-dehydroquinate synthase, found in Bacillus cereus (strain AH820).